The chain runs to 1651 residues: A.superbus venom factor 2 (1651 aa).

A signal peptide spans 1–22 (MEGMALYLVAALLIGFPGSSHG). N-linked (GlcNAc...) asparagine glycosylation is present at N189. Mg(2+) is bound by residues P519, D542, V543, and D545. 12 disulfide bridges follow: C547-C808, C616-C651, C684-C711, C685-C718, C698-C719, C864-C1501, C1346-C1477, C1377-C1446, C1494-C1499, C1506-C1578, C1525-C1649, and C1625-C1634. Residues 657–739 (RRRRSSVLLL…QRESELFLAR (83 aa)) constitute a propeptide that is removed on maturation. The interval 661 to 739 (SSVLLLDSKA…QRESELFLAR (79 aa)) is C3a-like domain. An Anaphylatoxin-like domain is found at 684 to 719 (CCEDGMHENPMGYTCEKRAKYTQEGDACKAAFLECC). A factor B binding site region spans residues 743–754 (EDEFFEEDNIIS). Residues 992 to 1269 (HLIITPSGSG…VMVFQALAEY (278 aa)) constitute a propeptide that is removed on maturation. Residues 992 to 1269 (HLIITPSGSG…VMVFQALAEY (278 aa)) form a C3d-like domain region. The interval 1197–1259 (VLMAASTGRD…GGTYGQTQAT (63 aa)) is factor H binding site. N-linked (GlcNAc...) asparagine glycosylation is found at N1282 and N1352. The 144-residue stretch at 1506 to 1649 (CSLLNQQKKI…LSNTLTIFGC (144 aa)) folds into the NTR domain.

It belongs to the venom complement C3 homolog family. In terms of assembly, heterotrimer of alpha, beta and gamma chains; disulfide-linked. Is active with factor B in the presence of factor D. In terms of processing, first processed by the removal of 4 Arg residues by furin-type protease, forming two chains, alpha and gamma/beta precursor, linked by a disulfide bond. This mature AVF is composed of three chains: alpha, gamma and beta. As to expression, expressed by the venom gland.

The protein localises to the secreted. Complement-activating protein in snake venom. It is a structural and functional analog of complement component C3b, the activated form of C3. It binds factor B (CFB), which is subsequently cleaved by factor D (CFD) to form the bimolecular complex AVF/Bb. AVF/Bb is a C3 convertase that cleaves complement component C3, but not C5 (as do CVF/Bb). In Austrelaps superbus (Lowland copperhead snake), this protein is A.superbus venom factor 2.